The following is a 156-amino-acid chain: Endoribonuclease YbeY (156 aa).

Residues His-122, His-126, and His-132 each contribute to the Zn(2+) site.

Belongs to the endoribonuclease YbeY family. Requires Zn(2+) as cofactor.

Its subcellular location is the cytoplasm. Its function is as follows. Single strand-specific metallo-endoribonuclease involved in late-stage 70S ribosome quality control and in maturation of the 3' terminus of the 16S rRNA. This Bacillus mycoides (strain KBAB4) (Bacillus weihenstephanensis) protein is Endoribonuclease YbeY.